Consider the following 216-residue polypeptide: Pyrophosphatase PpaX (216 aa).

The Nucleophile role is filled by aspartate 9.

The protein belongs to the HAD-like hydrolase superfamily. PpaX family. It depends on Mg(2+) as a cofactor.

The catalysed reaction is diphosphate + H2O = 2 phosphate + H(+). Its function is as follows. Hydrolyzes pyrophosphate formed during P-Ser-HPr dephosphorylation by HPrK/P. Might play a role in controlling the intracellular pyrophosphate pool. The sequence is that of Pyrophosphatase PpaX from Bacillus cereus (strain G9842).